The chain runs to 703 residues: Elongation factor G (703 aa).

The region spanning E9–L292 is the tr-type G domain. Residues A18–T25, D91–H95, and N145–D148 each bind GTP.

It belongs to the TRAFAC class translation factor GTPase superfamily. Classic translation factor GTPase family. EF-G/EF-2 subfamily.

It is found in the cytoplasm. Its function is as follows. Catalyzes the GTP-dependent ribosomal translocation step during translation elongation. During this step, the ribosome changes from the pre-translocational (PRE) to the post-translocational (POST) state as the newly formed A-site-bound peptidyl-tRNA and P-site-bound deacylated tRNA move to the P and E sites, respectively. Catalyzes the coordinated movement of the two tRNA molecules, the mRNA and conformational changes in the ribosome. This is Elongation factor G from Leuconostoc mesenteroides subsp. mesenteroides (strain ATCC 8293 / DSM 20343 / BCRC 11652 / CCM 1803 / JCM 6124 / NCDO 523 / NBRC 100496 / NCIMB 8023 / NCTC 12954 / NRRL B-1118 / 37Y).